The chain runs to 183 residues: Large ribosomal subunit protein mL43 (183 aa).

Disordered regions lie at residues 120 to 144 and 162 to 183; these read HTDNPSIQGQWTPSPTNGLPSTGCG and PGALDRERDRIGSSFGFQAQAE. Positions 122-139 are enriched in polar residues; the sequence is DNPSIQGQWTPSPTNGLP. A compositionally biased stretch (basic and acidic residues) spans 162–172; it reads PGALDRERDRI.

It belongs to the mitochondrion-specific ribosomal protein mL43 family. As to quaternary structure, component of the mitochondrial ribosome large subunit (39S) which comprises a 16S rRNA and about 50 distinct proteins. Ubiquitous with the highest levels in the liver, heart and kidneys. The skeletal muscle, brain and testis showed lower but detectable expression. Expression is coregulated with TWNK.

It localises to the mitochondrion. This is Large ribosomal subunit protein mL43 (Mrpl43) from Mus musculus (Mouse).